The following is a 171-amino-acid chain: MNQPRLASGQRNLELTSRVVSAYLSRNIVPAADLASLIQQTYLSLCSTSQADKAEEAAVEEQRPAVPIKKSVTADFIICLEDGKKFKSLKRHLMAKYGLTPQQYREKWGLPADYPMVASSYAQKRSELARALGLGKKRTAPELGSGLVNHSQKMTEAAMQIAEKKVWAHRS.

The protein belongs to the ros/MucR family.

This chain is Putative MucR family transcriptional regulatory protein y4pD, found in Sinorhizobium fredii (strain NBRC 101917 / NGR234).